The chain runs to 259 residues: Diaminopimelate epimerase (259 aa).

Substrate contacts are provided by Asn14, Gln42, and Asn60. The Proton donor role is filled by Cys69. Residues 70 to 71, Asn151, Asn184, and 202 to 203 contribute to the substrate site; these read GN and ER. Cys211 acts as the Proton acceptor in catalysis. 212-213 contacts substrate; sequence GS.

It belongs to the diaminopimelate epimerase family. As to quaternary structure, homodimer.

Its subcellular location is the cytoplasm. It carries out the reaction (2S,6S)-2,6-diaminopimelate = meso-2,6-diaminopimelate. It functions in the pathway amino-acid biosynthesis; L-lysine biosynthesis via DAP pathway; DL-2,6-diaminopimelate from LL-2,6-diaminopimelate: step 1/1. In terms of biological role, catalyzes the stereoinversion of LL-2,6-diaminopimelate (L,L-DAP) to meso-diaminopimelate (meso-DAP), a precursor of L-lysine and an essential component of the bacterial peptidoglycan. This Wolbachia sp. subsp. Brugia malayi (strain TRS) protein is Diaminopimelate epimerase.